The primary structure comprises 361 residues: POU domain, class 3, transcription factor 4 (361 aa).

Disordered stretches follow at residues 99–131 (PHVAHHSPHTNHPNAWGASPAPNSSITSSGQPL) and 144–192 (MLEH…PTSD). The span at 119–131 (APNSSITSSGQPL) shows a compositional bias: polar residues. Residues 165 to 183 (VLREPPDHGELGSHHCQDH) are compositionally biased toward basic and acidic residues. Residues 186–260 (EETPTSDELE…LLNKWLEEAD (75 aa)) enclose the POU-specific domain. Ser-265 is subject to Phosphoserine. Residues 278–337 (KRKKRTSIEVSVKGVLETHFLKCPKPAAQEISSLADSLQLEKEVVRVWFCNRRQKEKRMT) constitute a DNA-binding region (homeobox). The segment at 334–361 (KRMTPPGDQQPHEVYSHTVKTDASCHDL) is disordered. Basic and acidic residues predominate over residues 343-361 (QPHEVYSHTVKTDASCHDL).

Belongs to the POU transcription factor family. Class-3 subfamily. Interacts with HNRNPU. Brain specific.

The protein resides in the nucleus. In terms of biological role, probable transcription factor which exert its primary action widely during early neural development and in a very limited set of neurons in the mature brain. The sequence is that of POU domain, class 3, transcription factor 4 (Pou3f4) from Mus musculus (Mouse).